The sequence spans 454 residues: MEKFTKMGPMTTTSETERYPRIALISTHGYVAAHPPLGAADTGGQVVYVLELARKLGQLGYTVDLYTRRFEDQPEFDEVDERVRVVRIPCGGRDFIPKEYLHRHLMEWCENALRFIKKNDLNYSFINSHYWDAGVAGQRLSEALKIPHLHTPHSLGIWKKRQMETDYPEKADTFELEFNFKERIQHELIIYRSCDMVIATTPVQLDVLIEDYGLKRKHIHMIPPGYDDNRFFPVSDATRQMIRQRFGFEGKVVLALGRLATNKGYDLLIDGFSVLAEREPEARLHLAVGGENMDEQETTILNQLKERVKSLGLEDKVAFSGYVADEDLPDIYRAADLFVLSSRYEPFGMTAIEAMASGTPTVVTIHGGLFRAISYGRHALFADPFDKEDLGITMMKPFKHERLYGRLSRMGAHKARSLFTWTGIAQQLLALVEGRTMMPVLEEADWAEPWNDGD.

The protein belongs to the glycosyltransferase 1 family. Mg(2+) is required as a cofactor. It depends on Mn(2+) as a cofactor.

It catalyses the reaction beta-D-fructose 6-phosphate + GDP-alpha-D-mannose = beta-D-fructofuranosyl alpha-D-mannopyranoside 6(F)-phosphate + GDP + H(+). Its pathway is carbohydrate metabolism; mannosylfructose biosynthesis; beta-D-fructofuranosyl alpha-D-mannopyranoside from D-fructose 6-phosphate and GDP-alpha-D-mannose: step 1/2. The chain is Mannosylfructose-phosphate synthase from Agrobacterium fabrum (strain C58 / ATCC 33970) (Agrobacterium tumefaciens (strain C58)).